The sequence spans 413 residues: uncharacterized protein (413 aa).

This sequence belongs to the mimivirus L17x/L18x family.

This is an uncharacterized protein from Acanthamoeba polyphaga (Amoeba).